The primary structure comprises 427 residues: Zinc finger protein 2 (427 aa).

The region spanning 14 to 85 is the KRAB domain; the sequence is VTFEDVAVTF…GFHGSEEKTW (72 aa). The segment at 111-142 is disordered; sequence HRKQSSLCPKREIQTLTGGPEPEKESPKARTC. C2H2-type zinc fingers lie at residues 169 to 191, 197 to 219, 225 to 247, 253 to 275, 281 to 303, 309 to 331, 337 to 359, and 365 to 387; these read QECS…QRTH, YDCP…LMFH, YECD…QRIH, FKCN…QRIH, YECQ…LLTH, YECR…QKVH, YQCS…QKIH, and YECG…QRVH. A C2H2-type 9; degenerate zinc finger spans residues 393-415; the sequence is FECSVCGKEFSSKSSIIQHQRRY.

This sequence belongs to the krueppel C2H2-type zinc-finger protein family.

The protein resides in the nucleus. Functionally, may be involved in transcriptional regulation. This chain is Zinc finger protein 2, found in Mus musculus (Mouse).